The chain runs to 372 residues: MSHQHILTLFNLLPVATNISTWWNFGSMLLTCSIIQMTTGFFLAIHYTANTNLAFSSVIHILRDIPNGWCLQNLHSIGASMFFICIYIHIARGLYFGSYMNKKVWMSGILLLTILMATSFFGYVLPWGQMSFWAATVITNLLTAVPYLGTNLTIWLWGGFAINDPTLTRFFALHFILPFMIMSTSSIHIILLHEEGSSNPLGTNSDIDKIPFHPYHSYKDLFMLTLLLFTMMSIMSFSPDMFNDSENFSKANPMMTPQHIKPEWYFLFAYGILRSIPNKLGGTLALLLSIMILLLPPFTHTSHIRSMTFRPMAQFLFWTMITTFVILTWAASKPVESPYITISQMASTMYFLFFIINPLLGWMENKILNTNH.

4 helical membrane passes run 25–45, 69–90, 105–125, and 170–190; these read FGSMLLTCSIIQMTTGFFLAI, WCLQNLHSIGASMFFICIYIHI, WMSGILLLTILMATSFFGYVL, and FFALHFILPFMIMSTSSIHII. Residues H75 and H89 each coordinate heme b. Heme b contacts are provided by H174 and H188. An a ubiquinone-binding site is contributed by H193. A run of 4 helical transmembrane segments spans residues 218–238, 280–300, 312–332, and 339–358; these read YKDLFMLTLLLFTMMSIMSFS, LGGTLALLLSIMILLLPPFTH, MAQFLFWTMITTFVILTWAAS, and YITISQMASTMYFLFFIINP.

The protein belongs to the cytochrome b family. In terms of assembly, the cytochrome bc1 complex contains 3 respiratory subunits (MT-CYB, CYC1 and UQCRFS1), 2 core proteins (UQCRC1 and UQCRC2) and probably 6 low-molecular weight proteins. It depends on heme b as a cofactor.

Its subcellular location is the mitochondrion inner membrane. Functionally, component of the ubiquinol-cytochrome c reductase complex (complex III or cytochrome b-c1 complex) that is part of the mitochondrial respiratory chain. The b-c1 complex mediates electron transfer from ubiquinol to cytochrome c. Contributes to the generation of a proton gradient across the mitochondrial membrane that is then used for ATP synthesis. The polypeptide is Cytochrome b (MT-CYB) (Acrochordus granulatus (Rasp-skinned water snake)).